The following is a 440-amino-acid chain: 2-methylisoborneol synthase (440 aa).

A disordered region spans residues 1-116 (MPDSGPLGPH…SPAPAEPAAG (116 aa)). Residues 17-27 (TPATTVPDAPA) are compositionally biased toward low complexity. The segment covering 48 to 58 (PPVPIPSPSPP) has biased composition (pro residues). Positions 59 to 75 (SGSASAAADTPDATTVG) are enriched in low complexity. Residues 102–111 (PSLPGSPAPA) show a composition bias toward pro residues. Mg(2+)-binding residues include aspartate 197, aspartate 198, glutamate 202, asparagine 345, serine 349, and glutamate 353.

The protein belongs to the terpene synthase family. 2-methylisoborneol synthase subfamily. Requires Mg(2+) as cofactor.

It carries out the reaction (E)-2-methylgeranyl diphosphate + H2O = 2-methylisoborneol + diphosphate. Functionally, catalyzes the cyclization of 2-methylgeranyl diphosphate (2-MeGPP) to 2-methylisoborneol (2-MIB), which likely involves the intermediacy of 2-methyllinalyl diphosphate. This is 2-methylisoborneol synthase from Streptomyces ambofaciens (strain ATCC 23877 / 3486 / DSM 40053 / JCM 4204 / NBRC 12836 / NRRL B-2516).